The sequence spans 127 residues: Apolipoprotein C-IV (127 aa).

Residues 1 to 27 form the signal peptide; it reads MSLLRNRLQDLPALCLCVLVLACIGAC.

Belongs to the apolipoprotein C4 family.

It is found in the secreted. May participate in lipoprotein metabolism. This chain is Apolipoprotein C-IV (APOC4), found in Chlorocebus sabaeus (Green monkey).